Here is an 852-residue protein sequence, read N- to C-terminus: Bifunctional isopimaradiene synthase, chloroplastic (852 aa).

The N-terminal 53 residues, 1 to 53, are a transit peptide targeting the chloroplast; the sequence is HHLTANTQSIPHFSTTLNAGSSARKRRSLYLRWGKGSNKIIACVGEGATSVPY. Lys252 is a binding site for substrate. Asp385 and Asp387 together coordinate Mg(2+). A DXDD motif motif is present at residues 385–388; sequence DIDD. Lys472 is a binding site for substrate. Mg(2+) contacts are provided by Asp604, Asp608, Asn748, Thr752, and Glu756. A DDXXD motif motif is present at residues 604–608; sequence DDLYD.

It belongs to the terpene synthase family. Tpsd subfamily. Mg(2+) is required as a cofactor.

Its subcellular location is the plastid. The protein localises to the chloroplast. It catalyses the reaction (2E,6E,10E)-geranylgeranyl diphosphate = (+)-copalyl diphosphate. The enzyme catalyses (+)-copalyl diphosphate = isopimara-7,15-diene + diphosphate. The protein operates within terpene metabolism; oleoresin biosynthesis. In terms of biological role, involved in defensive oleoresin formation in conifers in response to insect attack or other injury. Involved in diterpene (C20) olefins biosynthesis. Bifunctional enzyme that catalyzes two sequential cyclizations of geranylgeranyl diphosphate (GGPP) to isopimara-7,15-diene. This Abies balsamea (Balsam fir) protein is Bifunctional isopimaradiene synthase, chloroplastic (TPS-ISO).